We begin with the raw amino-acid sequence, 239 residues long: Uridylate kinase (239 aa).

12–15 lines the ATP pocket; the sequence is KLSG. An involved in allosteric activation by GTP region spans residues 21 to 26; sequence GEQGFG. Gly55 contributes to the UMP binding site. Residues Gly56 and Arg60 each contribute to the ATP site. UMP is bound by residues Asp75 and 136–143; that span reads TGNPYFST. ATP contacts are provided by Thr163, Tyr169, and Asp172.

Belongs to the UMP kinase family. Homohexamer.

The protein localises to the cytoplasm. The enzyme catalyses UMP + ATP = UDP + ADP. It functions in the pathway pyrimidine metabolism; CTP biosynthesis via de novo pathway; UDP from UMP (UMPK route): step 1/1. With respect to regulation, allosterically activated by GTP. Inhibited by UTP. Its function is as follows. Catalyzes the reversible phosphorylation of UMP to UDP. The polypeptide is Uridylate kinase (Koribacter versatilis (strain Ellin345)).